The primary structure comprises 1190 residues: Phosphatidylinositol-3,5-bisphosphate 3-phosphatase MTMR4 (1190 aa).

Residue serine 8 is modified to Phosphoserine. A Myotubularin phosphatase domain is found at 153–570 (EHIRCRQEAE…RALHLWTAVY (418 aa)). Residues asparagine 320, asparagine 345, and isoleucine 346 each coordinate a 1,2-diacyl-sn-glycero-3-phospho-(1D-myo-inositol-3,5-bisphosphate). Residues asparagine 320, asparagine 345, and isoleucine 346 each coordinate a 1,2-diacyl-sn-glycero-3-phospho-(1D-myo-inositol-3-phosphate). The Phosphocysteine intermediate role is filled by cysteine 407. Positions 408, 409, 410, 411, 412, 413, 449, and 453 each coordinate a 1,2-diacyl-sn-glycero-3-phospho-(1D-myo-inositol-3,5-bisphosphate). A 1,2-diacyl-sn-glycero-3-phospho-(1D-myo-inositol-3-phosphate) contacts are provided by serine 408, aspartate 409, glycine 410, tryptophan 411, aspartate 412, and arginine 413. Arginine 453 contacts a 1,2-diacyl-sn-glycero-3-phospho-(1D-myo-inositol-3-phosphate). 2 positions are modified to phosphoserine: serine 610 and serine 629. Disordered regions lie at residues 616–694 (SACD…FKGH), 724–749 (ETEA…GKPP), and 773–848 (DFPE…PSSV). Residues 618–637 (CDTSSPLTRTSSDPNLNNHS) are compositionally biased toward polar residues. The segment covering 782-847 (LTGTPQQPHL…SISHQEQPSS (66 aa)) has biased composition (polar residues). The PY-motif; substrate motif for NEDD4 motif lies at 999–1003 (VPPLY). A coiled-coil region spans residues 1020–1052 (LRQIEAGYRQEVEQLRRQVRELQMRLDIRHCCA). Residues 1109–1169 (DHMASHCFNC…VCNSCYEHIQ (61 aa)) form an FYVE-type zinc finger. The Zn(2+) site is built by cysteine 1115, cysteine 1118, cysteine 1131, cysteine 1134, cysteine 1139, cysteine 1142, cysteine 1161, and cysteine 1164.

The protein belongs to the protein-tyrosine phosphatase family. Non-receptor class myotubularin subfamily. In terms of assembly, homooligomeric. Forms MTMR3:MTMR4 heterooligomers; regulates the localization of both proteins. The MTMR3:MTMR4 heterooligomer can also recruit both CEP55 and PLK1; occurs during early mitosis, regulates the phosphorylation of CEP55 by PLK1 and its recruitment to the midbody where it can mediate cell abscission. Interacts with SMAD2 and SMAD3; negatively regulates TGF-beta signaling through SMAD2 and SMAD3 dephosphorylation and retention in endosomes. Interacts with SMAD1; negatively regulates BMP signaling through SMAD1 dephosphorylation and retention in endosomes. Post-translationally, ubiquitinated. Ubiquitination by NEDD4 probably leads to proteasomal degradation. In terms of processing, phosphorylated by CDK1 during mitosis.

It is found in the early endosome membrane. It localises to the recycling endosome membrane. The protein resides in the late endosome membrane. The protein localises to the cytoplasmic vesicle. Its subcellular location is the phagosome membrane. The enzyme catalyses a 1,2-diacyl-sn-glycero-3-phospho-(1D-myo-inositol-3-phosphate) + H2O = a 1,2-diacyl-sn-glycero-3-phospho-(1D-myo-inositol) + phosphate. The catalysed reaction is a 1,2-diacyl-sn-glycero-3-phospho-(1D-myo-inositol-3,5-bisphosphate) + H2O = a 1,2-diacyl-sn-glycero-3-phospho-(1D-myo-inositol-5-phosphate) + phosphate. It carries out the reaction 1,2-dioctanoyl-sn-glycero-3-phospho-(1-D-myo-inositol-3-phosphate) + H2O = 1,2-dioctanoyl-sn-glycero-3-phospho-(1D-myo-inositol) + phosphate. It catalyses the reaction 1,2-dioctanoyl-sn-glycero-3-phospho-(1D-myo-inositol-3,5-bisphosphate) + H2O = 1,2-dioctanoyl-sn-glycero-3-phospho-(1D-myo-inositol-5-phosphate) + phosphate. Its function is as follows. Lipid phosphatase that specifically dephosphorylates the D-3 position of phosphatidylinositol 3-phosphate and phosphatidylinositol 3,5-bisphosphate, generating phosphatidylinositol and phosphatidylinositol 5-phosphate. Decreases the levels of phosphatidylinositol 3-phosphate, a phospholipid found in cell membranes where it acts as key regulator of both cell signaling and intracellular membrane traffic, in a subset of endosomal membranes to negatively regulate both endocytic recycling and trafficking and/or maturation of endosomes toward lysosomes. Through phosphatidylinositol 3-phosphate turnover in phagosome membranes regulates phagocytosis and phagosome maturation. By decreasing phosphatidylinositol 3-monophosphate (PI3P) levels in immune cells it can also regulate the innate immune response. Beside its lipid phosphatase activity, can also function as a molecular adapter to regulate midbody abscission during mitotic cytokinesis. Can also negatively regulate TGF-beta and BMP signaling through Smad proteins dephosphorylation and retention in endosomes. The protein is Phosphatidylinositol-3,5-bisphosphate 3-phosphatase MTMR4 of Mus musculus (Mouse).